We begin with the raw amino-acid sequence, 522 residues long: Vicilin-like seed storage protein At4g36700 (522 aa).

The first 25 residues, 1–25, serve as a signal peptide directing secretion; sequence MTRFAVLPLSVLLLVLLFLCTESLA. Asn-206, Asn-303, Asn-341, Asn-374, and Asn-414 each carry an N-linked (GlcNAc...) asparagine glycan. The 157-residue stretch at 265-421 folds into the Cupin type-1 domain; the sequence is FNVFESEPDF…SLNVSSVTID (157 aa). Residues 457 to 522 are disordered; the sequence is DERKRRHDER…EWEMEGEEES (66 aa). Composition is skewed to basic and acidic residues over residues 466–491 and 501–515; these read RKKE…EKKR and EELR…KEWE.

This sequence belongs to the 7S seed storage protein family.

In terms of biological role, seed storage protein. In Arabidopsis thaliana (Mouse-ear cress), this protein is Vicilin-like seed storage protein At4g36700.